The primary structure comprises 238 residues: 14-3-3 protein 2 (238 aa).

This sequence belongs to the 14-3-3 family.

In terms of biological role, probable adapter protein. The protein is 14-3-3 protein 2 of Entamoeba histolytica (strain ATCC 30459 / HM-1:IMSS / ABRM).